Consider the following 512-residue polypeptide: Cobyric acid synthase (512 aa).

The GATase cobBQ-type domain occupies 262 to 442 (WLRVAAIRLP…WHGLLETDRF (181 aa)). The active-site Nucleophile is the Cys-343. The active site involves His-434.

Belongs to the CobB/CobQ family. CobQ subfamily.

The protein operates within cofactor biosynthesis; adenosylcobalamin biosynthesis. In terms of biological role, catalyzes amidations at positions B, D, E, and G on adenosylcobyrinic A,C-diamide. NH(2) groups are provided by glutamine, and one molecule of ATP is hydrogenolyzed for each amidation. The polypeptide is Cobyric acid synthase (Rhodococcus jostii (strain RHA1)).